A 378-amino-acid polypeptide reads, in one-letter code: MSHLDNGFRSLTLQRFPATDDVNPLQAWEAADEYLLQQLDDTEIRGPVLILNDAFGALSCALAEHKPYSIGDSYISELATRENLRLNGIDESSVKFLDSTADYPQQPGVVLIKVPKTLALLEQQLRALRKVVTSDTRIIAGAKARDIHTSTLELFEKVLGPTTTTLAWKKARLINCTFNEPPLADAPQTVSWKLEGTDWTIHNHANVFSRTGLDIGARFFMQHLPENLEGEIVDLGCGNGVIGLTLLDKNPQAKVVFVDESPMAVASSRMNVETNMPEALDRCEFMINNALSGVKPFRFNAVLCNPPFHQQHALTDNVAWEMFHHARRCLKINGELYIVANRHLDYFHKLKKIFGNCTTIATNNKFVVLKTVKLGRRR.

Belongs to the methyltransferase superfamily. RlmG family.

Its subcellular location is the cytoplasm. It catalyses the reaction guanosine(1835) in 23S rRNA + S-adenosyl-L-methionine = N(2)-methylguanosine(1835) in 23S rRNA + S-adenosyl-L-homocysteine + H(+). Specifically methylates the guanine in position 1835 (m2G1835) of 23S rRNA. This Escherichia coli O139:H28 (strain E24377A / ETEC) protein is Ribosomal RNA large subunit methyltransferase G.